A 292-amino-acid chain; its full sequence is Oxidative stress-responsive serine-rich protein 1 (292 aa).

Residues 24–178 (ASGSVASLSV…ATQVPQASLK (155 aa)) are disordered. The segment covering 65-83 (STRKSSRGAVRTQRRRRSK) has biased composition (basic residues). Residues Thr-143 and Thr-233 each carry the phosphothreonine modification.

In Homo sapiens (Human), this protein is Oxidative stress-responsive serine-rich protein 1 (OSER1).